The sequence spans 244 residues: Cell division protein DivIB (244 aa).

Residues 1–6 are Cytoplasmic-facing; it reads MKIKWP. Residues 7-27 traverse the membrane as a helical segment; sequence LQLWISLAVFVTIAVGTLLLL. Residues 28–104 enclose the POTRA domain; the sequence is QPWQTIKTVT…IDIAEKVTAG (77 aa). The Extracellular segment spans residues 28–244; sequence QPWQTIKTVT…KADNKAHQKQ (217 aa).

It belongs to the FtsQ/DivIB family. DivIB subfamily.

It is found in the cell membrane. Its function is as follows. Cell division protein that may be involved in stabilizing or promoting the assembly of the division complex. In Leuconostoc kimchii (strain IMSNU 11154 / KCTC 2386 / IH25), this protein is Cell division protein DivIB.